The primary structure comprises 99 residues: uncharacterized protein (99 aa).

A signal peptide spans 1-17; the sequence is MMMNAFFPAMALMVLVG. Residue cysteine 18 is the site of N-palmitoyl cysteine attachment. Cysteine 18 is lipidated: S-diacylglycerol cysteine.

It is found in the cell membrane. This is an uncharacterized protein from Shigella flexneri.